The primary structure comprises 147 residues: Large ribosomal subunit protein uL15 (147 aa).

The segment covering 1-15 (MTDRVKKTRKLRGHV) has biased composition (basic residues). The tract at residues 1–34 (MTDRVKKTRKLRGHVSHGYGRVGKHRKHSGGRGL) is disordered.

The protein belongs to the universal ribosomal protein uL15 family.

This chain is Large ribosomal subunit protein uL15 (RPL27A), found in Encephalitozoon cuniculi (strain GB-M1) (Microsporidian parasite).